Here is a 79-residue protein sequence, read N- to C-terminus: Defensin-like protein 109 (79 aa).

The first 24 residues, 1 to 24, serve as a signal peptide directing secretion; sequence MDFTKKILVVFAFTIMLGISSVHC. 4 disulfides stabilise this stretch: C41/C76, C47/C68, C54/C74, and C58/C75.

It belongs to the DEFL family.

The protein resides in the secreted. This chain is Defensin-like protein 109, found in Arabidopsis thaliana (Mouse-ear cress).